Consider the following 379-residue polypeptide: 1-deoxy-D-xylulose 5-phosphate reductoisomerase (379 aa).

NADPH is bound by residues Thr10, Gly11, Ser12, Val13, and Asn121. Lys122 is a binding site for 1-deoxy-D-xylulose 5-phosphate. Residue Glu123 participates in NADPH binding. Asp147 serves as a coordination point for Mn(2+). Positions 148, 149, 173, and 196 each coordinate 1-deoxy-D-xylulose 5-phosphate. Glu149 lines the Mn(2+) pocket. Gly202 is a binding site for NADPH. Residues Ser209, Asn214, Lys215, and Glu218 each contribute to the 1-deoxy-D-xylulose 5-phosphate site. Mn(2+) is bound at residue Glu218.

It belongs to the DXR family. It depends on Mg(2+) as a cofactor. The cofactor is Mn(2+).

It catalyses the reaction 2-C-methyl-D-erythritol 4-phosphate + NADP(+) = 1-deoxy-D-xylulose 5-phosphate + NADPH + H(+). The protein operates within isoprenoid biosynthesis; isopentenyl diphosphate biosynthesis via DXP pathway; isopentenyl diphosphate from 1-deoxy-D-xylulose 5-phosphate: step 1/6. In terms of biological role, catalyzes the NADPH-dependent rearrangement and reduction of 1-deoxy-D-xylulose-5-phosphate (DXP) to 2-C-methyl-D-erythritol 4-phosphate (MEP). The protein is 1-deoxy-D-xylulose 5-phosphate reductoisomerase of Chlamydia abortus (strain DSM 27085 / S26/3) (Chlamydophila abortus).